A 345-amino-acid chain; its full sequence is KRR1 small subunit processome component homolog (345 aa).

Residues aspartate 125–asparagine 193 form the KH domain. Basic residues predominate over residues asparagine 232–lysine 245. Disordered stretches follow at residues asparagine 232–valine 260 and glutamine 273–lysine 329. Residues phenylalanine 270–arginine 298 adopt a coiled-coil conformation. Basic and acidic residues-rich tracts occupy residues lysine 276–aspartate 302 and leucine 315–lysine 329.

Belongs to the KRR1 family. Monomer. Component of the ribosomal small subunit (SSU) processome.

The protein resides in the nucleus. Its subcellular location is the nucleolus. In terms of biological role, required for 40S ribosome biogenesis. Involved in nucleolar processing of pre-18S ribosomal RNA and ribosome assembly. Binds to RNA. Required for female germline development, cell viability during eye development and for survival of dividing cells and epithelial cells during early wing disk development. The protein is KRR1 small subunit processome component homolog of Drosophila erecta (Fruit fly).